Consider the following 255-residue polypeptide: 4-hydroxy-tetrahydrodipicolinate reductase (255 aa).

NAD(+) contacts are provided by residues 8 to 13 (GASGRM), 89 to 91 (GTT), and 114 to 117 (SSNY). His146 functions as the Proton donor/acceptor in the catalytic mechanism. His147 provides a ligand contact to (S)-2,3,4,5-tetrahydrodipicolinate. The active-site Proton donor is the Lys150. A (S)-2,3,4,5-tetrahydrodipicolinate-binding site is contributed by 156-157 (GT).

Belongs to the DapB family.

It is found in the cytoplasm. It catalyses the reaction (S)-2,3,4,5-tetrahydrodipicolinate + NAD(+) + H2O = (2S,4S)-4-hydroxy-2,3,4,5-tetrahydrodipicolinate + NADH + H(+). It carries out the reaction (S)-2,3,4,5-tetrahydrodipicolinate + NADP(+) + H2O = (2S,4S)-4-hydroxy-2,3,4,5-tetrahydrodipicolinate + NADPH + H(+). The protein operates within amino-acid biosynthesis; L-lysine biosynthesis via DAP pathway; (S)-tetrahydrodipicolinate from L-aspartate: step 4/4. Its function is as follows. Catalyzes the conversion of 4-hydroxy-tetrahydrodipicolinate (HTPA) to tetrahydrodipicolinate. The chain is 4-hydroxy-tetrahydrodipicolinate reductase from Methanoregula boonei (strain DSM 21154 / JCM 14090 / 6A8).